The chain runs to 362 residues: 3-dehydroquinate synthase (362 aa).

NAD(+) contacts are provided by residues 71–76 (DGEQYK), 105–109 (GVVGD), 129–130 (TT), lysine 142, lysine 151, and 169–172 (CLKT). 3 residues coordinate Zn(2+): glutamate 184, histidine 247, and histidine 264.

It belongs to the sugar phosphate cyclases superfamily. Dehydroquinate synthase family. NAD(+) serves as cofactor. Requires Co(2+) as cofactor. Zn(2+) is required as a cofactor.

It localises to the cytoplasm. It catalyses the reaction 7-phospho-2-dehydro-3-deoxy-D-arabino-heptonate = 3-dehydroquinate + phosphate. Its pathway is metabolic intermediate biosynthesis; chorismate biosynthesis; chorismate from D-erythrose 4-phosphate and phosphoenolpyruvate: step 2/7. In terms of biological role, catalyzes the conversion of 3-deoxy-D-arabino-heptulosonate 7-phosphate (DAHP) to dehydroquinate (DHQ). This chain is 3-dehydroquinate synthase, found in Shigella flexneri.